We begin with the raw amino-acid sequence, 185 residues long: MNKQKFYTNLSKEVSYALRHAQWKYELELDENGWVSVEQLLHALHQSIEWRDVKIEDLKIMIEKSEKKRHELKENKIRALYGHSIPMKIVKEEGVPPEFLYHGTSPRFLNSIESNGLSPMSRQYVHLSEDIITAELVGKRKDKHPIILEVNTGKAREEGVKFYLGNEKVWLADEIPSEFIAINKN.

Belongs to the KptA/TPT1 family.

In terms of biological role, removes the 2'-phosphate from RNA via an intermediate in which the phosphate is ADP-ribosylated by NAD followed by a presumed transesterification to release the RNA and generate ADP-ribose 1''-2''-cyclic phosphate (APPR&gt;P). May function as an ADP-ribosylase. The protein is Probable RNA 2'-phosphotransferase of Bacillus thuringiensis subsp. konkukian (strain 97-27).